We begin with the raw amino-acid sequence, 505 residues long: Cytochrome P450 9b1 (505 aa).

Residue Cys449 coordinates heme.

Belongs to the cytochrome P450 family. It depends on heme as a cofactor.

It is found in the endoplasmic reticulum membrane. The protein localises to the microsome membrane. In terms of biological role, may be involved in the metabolism of insect hormones and in the breakdown of synthetic insecticides. This Drosophila melanogaster (Fruit fly) protein is Cytochrome P450 9b1 (Cyp9b1).